The chain runs to 154 residues: uncharacterized protein (154 aa).

Transmembrane regions (helical) follow at residues 15-37, 58-80, 95-116, and 123-145; these read DFSF…ALIT, FAAM…WLWG, LGAL…FAFT, and LVIS…FVPH.

Its subcellular location is the cell membrane. This is an uncharacterized protein from Archaeoglobus fulgidus (strain ATCC 49558 / DSM 4304 / JCM 9628 / NBRC 100126 / VC-16).